We begin with the raw amino-acid sequence, 104 residues long: L-rhamnose mutarotase (104 aa).

Position 18 (Y18) interacts with substrate. H22 (proton donor) is an active-site residue. Substrate-binding positions include Y41 and 76-77; that span reads WW.

Belongs to the rhamnose mutarotase family. Homodimer.

It localises to the cytoplasm. It catalyses the reaction alpha-L-rhamnose = beta-L-rhamnose. It participates in carbohydrate metabolism; L-rhamnose metabolism. Involved in the anomeric conversion of L-rhamnose. The sequence is that of L-rhamnose mutarotase from Klebsiella pneumoniae subsp. pneumoniae (strain ATCC 700721 / MGH 78578).